A 393-amino-acid polypeptide reads, in one-letter code: 2-methylcitrate synthase (393 aa).

Substrate is bound by residues Arg-92 and His-207. His-242 is a catalytic residue. Residue 275–279 participates in CoA binding; it reads KIMGF. The active site involves His-281. Substrate is bound at residue Arg-290. Asp-332 is an active-site residue. Positions 357 and 376 each coordinate substrate.

Belongs to the citrate synthase family. As to quaternary structure, homodimer.

It carries out the reaction propanoyl-CoA + oxaloacetate + H2O = (2S,3S)-2-methylcitrate + CoA + H(+). The enzyme catalyses oxaloacetate + acetyl-CoA + H2O = citrate + CoA + H(+). It functions in the pathway organic acid metabolism; propanoate degradation. The protein operates within carbohydrate metabolism; tricarboxylic acid cycle; isocitrate from oxaloacetate: step 1/2. Involved in the catabolism of short chain fatty acids (SCFA) via the tricarboxylic acid (TCA)(acetyl degradation route) and via the 2-methylcitrate cycle I (propionate degradation route). Catalyzes the Claisen condensation of propionyl-CoA and oxaloacetate (OAA) to yield 2-methylcitrate (2-MC) and CoA. Also catalyzes the condensation of oxaloacetate with acetyl-CoA. This Mycobacterium tuberculosis (strain ATCC 35801 / TMC 107 / Erdman) protein is 2-methylcitrate synthase (gltA1).